An 871-amino-acid chain; its full sequence is DNA mismatch repair protein MutS (871 aa).

Residue 616–623 (GPNMAGKS) coordinates ATP. A disordered region spans residues 801-825 (ETEKTEESMEGTNLPKKKKEEKTSS).

Belongs to the DNA mismatch repair MutS family.

In terms of biological role, this protein is involved in the repair of mismatches in DNA. It is possible that it carries out the mismatch recognition step. This protein has a weak ATPase activity. The sequence is that of DNA mismatch repair protein MutS from Clostridium kluyveri (strain NBRC 12016).